We begin with the raw amino-acid sequence, 398 residues long: Putative molybdopterin biosynthesis protein MJ0666 (398 aa).

It belongs to the MoeA family.

It participates in cofactor biosynthesis; molybdopterin biosynthesis. The polypeptide is Putative molybdopterin biosynthesis protein MJ0666 (Methanocaldococcus jannaschii (strain ATCC 43067 / DSM 2661 / JAL-1 / JCM 10045 / NBRC 100440) (Methanococcus jannaschii)).